A 266-amino-acid chain; its full sequence is Energy-coupling factor transporter ATP-binding protein EcfA1 (266 aa).

An ABC transporter domain is found at Ile-2–Ala-237. Gly-37–Ser-44 is an ATP binding site.

Belongs to the ABC transporter superfamily. Energy-coupling factor EcfA family. As to quaternary structure, forms a stable energy-coupling factor (ECF) transporter complex composed of 2 membrane-embedded substrate-binding proteins (S component), 2 ATP-binding proteins (A component) and 2 transmembrane proteins (T component).

The protein localises to the cell membrane. Its function is as follows. ATP-binding (A) component of a common energy-coupling factor (ECF) ABC-transporter complex. Unlike classic ABC transporters this ECF transporter provides the energy necessary to transport a number of different substrates. In Mycoplasmopsis synoviae (strain 53) (Mycoplasma synoviae), this protein is Energy-coupling factor transporter ATP-binding protein EcfA1.